We begin with the raw amino-acid sequence, 314 residues long: Homeobox protein SIX3 (314 aa).

Residues Gly-188–Ala-247 constitute a DNA-binding region (homeobox). Disordered regions lie at residues Asn-214–Gly-233 and Arg-240–Val-314. Residues Pro-271–Thr-293 are compositionally biased toward low complexity. Positions Thr-298–Val-314 are enriched in polar residues.

Belongs to the SIX/Sine oculis homeobox family.

Its subcellular location is the nucleus. In terms of biological role, transcriptional regulator which can act as both a transcriptional repressor and activator by binding a ATTA homeodomain core recognition sequence on these target genes. During forebrain development represses WNT1 expression allowing zona limitans intrathalamica formation and thereby ensuring proper anterio-posterior patterning of the diencephalon and formation of the rostral diencephalon. Acts as a direct upstream activator of SHH expression in the rostral diencephalon ventral midline and that in turn SHH maintains its expression. In addition, Six3 activity is required for the formation of the telencephalon. During postnatal stages of brain development is necessary for ependymal cell maturation by promoting the maturation of radial glia into ependymal cells through regulation of neuroblast proliferation and migration. Acts on the proliferation and differentiation of neural progenitor cells through activating transcription of CCND1 and CCND2. During early lens formation plays a role in lens induction and specification by activating directly PAX6 in the presumptive lens ectoderm. In turn PAX6 activates SIX3 resulting in activation of PDGFRA and CCND1 promoting cell proliferation. Also is required for the neuroretina development by directly suppressing WNT8B expression in the anterior neural plate territory. Its action during retina development and lens morphogenesis is AES and TLE4-dependent manner. Furthermore, during eye development regulates several genes expression. Before and during early lens development represses the CRYGF promoter by binding a SIX repressor element. Directly activates RHO transcription, or cooperates with CRX or NRL. Six3 also functions in the formation of the proximodistal axis of the optic cup, and promotes the formation of optic vesicles-like structures. During pituitary development, acts in parallel or alternatively with HESX1 to control cell proliferation through Wnt/beta-catenin pathway. Plays a role in eye development by suppressing WNT1 expression and in dorsal-ventral patterning by repressing BMP signaling pathway. The protein is Homeobox protein SIX3 (SIX3) of Gallus gallus (Chicken).